The following is a 316-amino-acid chain: Epiphycan (316 aa).

The first 23 residues, 1 to 23 (MKTFVNIFLGFFIFESVGAVPIT), serve as a signal peptide directing secretion. An O-linked (Xyl...) (dermatan sulfate) serine glycan is attached at serine 98. One can recognise an LRRNT domain in the interval 100–137 (VLVPQTQDGLPTCLLCTCLGTTVYCDDRELDAVPPLPK). The cysteines at positions 112 and 124 are disulfide-linked. LRR repeat units lie at residues 138 to 159 (NTMY…DFAN), 162 to 183 (NLKR…AFRR), 186 to 207 (QLLE…PSTL), 232 to 252 (ELQH…PLPE), 253 to 274 (SLQA…TFCK), and 284 to 304 (ALED…PYAY). An intrachain disulfide couples cysteine 273 to cysteine 306. Asparagine 296 carries N-linked (GlcNAc...) asparagine glycosylation.

The protein belongs to the small leucine-rich proteoglycan (SLRP) family. SLRP class III subfamily. The O-linked glycosaminoglycan chain(s) are dermatan sulfate. Preferentially expressed in flattened chondrocytes of developing chick limb cartilage. Also found in the cartilage peripheral zone bordering with bone marrow cavity.

The protein resides in the secreted. It is found in the extracellular space. Its subcellular location is the extracellular matrix. May have a role in bone formation and also in establishing the ordered structure of cartilage through matrix organization. In Gallus gallus (Chicken), this protein is Epiphycan (EPYC).